We begin with the raw amino-acid sequence, 854 residues long: Protein translocase subunit SecA (854 aa).

ATP contacts are provided by residues glutamine 89, 107 to 111 (GEGKT), and aspartate 501.

Belongs to the SecA family. As to quaternary structure, monomer and homodimer. Part of the essential Sec protein translocation apparatus which comprises SecA, SecYEG and auxiliary proteins SecDF-YajC and YidC.

It is found in the cell inner membrane. The protein resides in the cytoplasm. The enzyme catalyses ATP + H2O + cellular proteinSide 1 = ADP + phosphate + cellular proteinSide 2.. Functionally, part of the Sec protein translocase complex. Interacts with the SecYEG preprotein conducting channel. Has a central role in coupling the hydrolysis of ATP to the transfer of proteins into and across the cell membrane, serving both as a receptor for the preprotein-SecB complex and as an ATP-driven molecular motor driving the stepwise translocation of polypeptide chains across the membrane. The protein is Protein translocase subunit SecA of Pelagibacter ubique (strain HTCC1062).